A 947-amino-acid chain; its full sequence is MSQPPIGGAAPATAAASPAAAATEARLHPEGSSRKQQRAQSPARPRDSSLRQTIAATRSPVGAGTKLNSVRQQQLQQQQQQGNKTGSRTGPPASIRGGGGGAEKATPLAPKGAAPGAVQPVAGAEAAPAATLAALGGRRPGPPEEPPRELESVPSKLGEPPPLGEGGGGGGEGGGAGGGSGEREGGAPQPPPPRGWRGKGVRAQQRGGSGGEGASPSPSSSSAGKTPGTGSRNSGSGVAGGGSGGGGSYWKEGCLQSELIQFHLKKERAAAAAAAAQMHAKNGGGSSSRSSPVSGPPAVCETLAVASASPMAAAAEGPQQSAEGSASGGGMQAAAPPSSQPHPQQLQEQEEMQEEMEKLREENETLKNEIDELRTEMDEMRDTFFEEDACQLQEMRHELERANKNCRILQYRLRKAERKRLRYAQTGEIDGELLRSLEQDLKVAKDVSVRLHHELENVEEKRTTTEDENEKLRQQLIEVEIAKQALQNELEKMKELSLKRRGSKDLPKSEKKAQQTPTEEDNEDLKCQLQFVKEEAALMRKKMAKIDKEKDRFEHELQKYRSFYGDLDSPLPKGEAGGPPSTREAELKLRLRLVEEEANILGRKIVELEVENRGLKAELDDLRGDDFNGSANPLMREQSESLSELRQHLQLVEDETELLRRNVADLEEQNKRITAELNKYKYKSGGHDSARHHDNAKTEALQEELKAARLQINELSGKVMQLQYENRVLMSNMQRYDLASHLGIRGSPRDSDAESDAGKKESDDDSRPPHRKREGPIGGESDSEEVRNIRCLTPTRSFYPAPGPWPKSFSDRQQMKDIRSEAERLGKTIDRLIADTSTIITEARIYVANGDLFGLMDEEDDGSRIREHELLYRINAQMKAFRKELQTFIDRLEVPKSADDRGAEEPISVSQMFQPIILLILILVLFSSLSYTTIFKLVFLFTLFFVL.

Residues Met1–Ala21 form the signal peptide. 3 disordered regions span residues Met1–Lys251, Lys266–Asn368, and Leu496–Asp524. Composition is skewed to low complexity over residues Ala9 to Glu24, Gln72 to Gln81, and Ala109 to Gly137. Over residues Gly141–Glu151 the composition is skewed to basic and acidic residues. Residues Gly164–Ser180 are compositionally biased toward gly residues. A compositionally biased stretch (low complexity) spans Ala214–Ser236. A compositionally biased stretch (gly residues) spans Gly237 to Ser248. Composition is skewed to low complexity over residues Ser287 to Pro297 and Ala304 to Ser325. A coiled-coil region spans residues His342 to Asn726. Composition is skewed to basic and acidic residues over residues Glu355 to Asn368 and Leu496 to Ala513. Ser569 carries the phosphoserine modification. Residues Gly743 to Val786 form a disordered region. Positions Ser747–Pro768 are enriched in basic and acidic residues. At Ser781 the chain carries Phosphoserine. The stretch at Asp811–Asp835 forms a coiled coil. Residues Pro915–Phe935 form a helical membrane-spanning segment.

This sequence belongs to the MTCL family.

Its subcellular location is the membrane. The polypeptide is Microtubule cross-linking factor 3 (Homo sapiens (Human)).